Here is a 272-residue protein sequence, read N- to C-terminus: Dermonecrotic toxin StSicTox-betaIC1 (272 aa).

The active site involves His5. Residues Glu25 and Asp27 each coordinate Mg(2+). His41 (nucleophile) is an active-site residue. Intrachain disulfides connect Cys45-Cys51 and Cys47-Cys191. Asp85 is a binding site for Mg(2+).

This sequence belongs to the arthropod phospholipase D family. Class II subfamily. Class IIb sub-subfamily. It depends on Mg(2+) as a cofactor. Expressed by the venom gland.

It is found in the secreted. The catalysed reaction is an N-(acyl)-sphingosylphosphocholine = an N-(acyl)-sphingosyl-1,3-cyclic phosphate + choline. The enzyme catalyses N-hexanoyl-sphing-4-enine-1-phosphocholine = N-(hexanoyl)-sphing-4-enine-1,3-cyclic phosphate + choline. It catalyses the reaction an N-(acyl)-sphingosylphosphoethanolamine = an N-(acyl)-sphingosyl-1,3-cyclic phosphate + ethanolamine. It carries out the reaction N-dodecanoyl-heptadecasphing-4-enine-1-phosphoethanolamine = N-dodecanoyl-heptadecasphing-4-enine-1,3-cyclic phosphate + ethanolamine. The catalysed reaction is a 1-acyl-sn-glycero-3-phosphoethanolamine = a 1-acyl-sn-glycero-2,3-cyclic phosphate + ethanolamine. The enzyme catalyses 1-tetradecanoyl-sn-glycero-3-phosphoethanolamine = 1-tetradecanoyl-sn-glycero-2,3-cyclic phosphate + ethanolamine. In terms of biological role, dermonecrotic toxins cleave the phosphodiester linkage between the phosphate and headgroup of certain phospholipids (sphingolipid and lysolipid substrates), forming an alcohol (often choline) and a cyclic phosphate. This toxin acts on lysophosphatidylethanolamine (LPE) and ceramide phosphoethanolamine (CPE) with high activity. This toxin acts on sphingomyelin (SM) with very low activity and is not active on lysophosphatidylserine (LPS), lysophosphatidylcholine (LPC) and lysophosphatidylglycerol (LPG). It acts by transphosphatidylation, releasing exclusively cyclic phosphate as second products. It is not surprising that spider toxins have affinity for ethanolamine-containing sphingolipids since they are common in insect prey. Induces dermonecrosis, hemolysis, increased vascular permeability, edema, inflammatory response, and platelet aggregation. This is Dermonecrotic toxin StSicTox-betaIC1 from Sicarius terrosus (Cave spider).